The chain runs to 300 residues: Merozoite surface protein 2 (300 aa).

Positions 1–20 (MKVIKTLSIINFFIFVTFNI) are cleaved as a signal peptide. 2 N-linked (GlcNAc...) asparagine glycosylation sites follow: Asn-22 and Asn-36. Residues 44–226 (EESKPPTGAV…EQTESPELQS (183 aa)) form a polymorphic region region. One copy of the 1; inverted repeat lies at 51–58 (GAVAGSGA). The 7 X 8 AA tandem repeats of G-S-G-A-G-A-V-A stretch occupies residues 51 to 110 (GAVAGSGAGAGSGAGAVAGSGAGAVAGSGAGAVAGSGAGAVAGSGAGAVAGSGAVAGSGA). Tandem repeats lie at residues 61-68 (GSGAGAVA), 69-76 (GSGAGAVA), 77-84 (GSGAGAVA), 85-92 (GSGAGAVA), and 93-100 (GSGAGAVA). A 7; inverted repeat occupies 103-110 (GAVAGSGA). Positions 111 to 261 (GNGANPGADA…DSQKECTDGN (151 aa)) are disordered. Positions 123–148 (SPSTPATTTTTTTTNDAEASTSTSSE) are enriched in low complexity. The segment covering 149–165 (NRNHNNAETNPKGKGEV) has biased composition (basic and acidic residues). 2 stretches are compositionally biased toward polar residues: residues 167-193 (KPNQANKETQNNSNVQQDSQTKSNVPR) and 200-228 (KSPTAQPEQAENSAPTAEQTESPELQSAP). N-linked (GlcNAc...) asparagine glycosylation is present at Asn-177. Asn-249 carries N-linked (GlcNAc...) asparagine glycosylation. Cys-257 and Cys-265 are oxidised to a cystine. 2 N-linked (GlcNAc...) asparagine glycosylation sites follow: Asn-273 and Asn-274. Asn-274 is lipidated: GPI-anchor amidated asparagine. A propeptide spans 275-300 (SSNIASINKFVVLISATLVLSFAIFI) (removed in mature form).

It localises to the cell membrane. In terms of biological role, may play a role in the merozoite attachment to the erythrocyte. The protein is Merozoite surface protein 2 of Plasmodium falciparum (isolate imr143).